The following is a 416-amino-acid chain: Probable protein phosphatase 2C 75 (416 aa).

Disordered stretches follow at residues 1-20 (MTEIYRTISTGRGDDVSPTK) and 32-51 (RRQAAVFGEPSSSRNRDRTD). Residues 108-411 (LYGIVSVMGR…DNISVVVIDL (304 aa)) enclose the PPM-type phosphatase domain. Mn(2+)-binding residues include aspartate 149, glycine 150, aspartate 337, and aspartate 402.

It belongs to the PP2C family. The cofactor is Mg(2+). Mn(2+) is required as a cofactor.

The enzyme catalyses O-phospho-L-seryl-[protein] + H2O = L-seryl-[protein] + phosphate. It catalyses the reaction O-phospho-L-threonyl-[protein] + H2O = L-threonyl-[protein] + phosphate. Its function is as follows. Negative regulator of abscisic acid (ABA) responses during seed germination. The sequence is that of Probable protein phosphatase 2C 75 (AHG1) from Arabidopsis thaliana (Mouse-ear cress).